Consider the following 673-residue polypeptide: Leucine zipper putative tumor suppressor 3 (673 aa).

Disordered stretches follow at residues 1–157 (MAKL…CSEP), 172–239 (FHSM…QHLA), and 251–317 (IGTA…PPSP). Residues 79–92 (SRERPGRYPSEDKG) show a composition bias toward basic and acidic residues. Residues 173 to 186 (HSMQNLCPPQTNGT) are compositionally biased toward polar residues. Low complexity predominate over residues 215–235 (GLSDSGRNSLTSLPTYSSSYS). Residues 258–269 (SGSGGSSGGGSG) show a composition bias toward gly residues. Low complexity predominate over residues 274–294 (GTSDSGRASSKSGSSSSMGRP). Positions 295 to 307 (GHLGSGEGGGGGL) are enriched in gly residues. Phosphoserine occurs at positions 316 and 318. Coiled-coil stretches lie at residues 317-496 (PSAL…SLRD) and 571-639 (RALR…RLRE). Residues 635–673 (RRLRERGAAGGASTPTPQHGEEKKAWTPSRLERIESTEI) are disordered. Positions 653 to 673 (HGEEKKAWTPSRLERIESTEI) are enriched in basic and acidic residues.

This sequence belongs to the LZTS3 family. In terms of assembly, interacts (via C-terminus) with SHANK3 (via PDZ domain). Interacts (via coiled coil) with SIPA1L1. Can form homooligomers.

The protein resides in the synapse. It is found in the postsynaptic density. It localises to the cell projection. Its subcellular location is the dendritic spine. The protein localises to the dendrite. The protein resides in the cytoplasm. It is found in the cytoskeleton. Functionally, may be involved in promoting the maturation of dendritic spines, probably via regulating SIPA1L1 levels at the postsynaptic density of synapses. The polypeptide is Leucine zipper putative tumor suppressor 3 (Homo sapiens (Human)).